The sequence spans 299 residues: Methionyl-tRNA formyltransferase (299 aa).

S109 to P112 provides a ligand contact to (6S)-5,6,7,8-tetrahydrofolate.

The protein belongs to the Fmt family.

It catalyses the reaction L-methionyl-tRNA(fMet) + (6R)-10-formyltetrahydrofolate = N-formyl-L-methionyl-tRNA(fMet) + (6S)-5,6,7,8-tetrahydrofolate + H(+). Functionally, attaches a formyl group to the free amino group of methionyl-tRNA(fMet). The formyl group appears to play a dual role in the initiator identity of N-formylmethionyl-tRNA by promoting its recognition by IF2 and preventing the misappropriation of this tRNA by the elongation apparatus. The sequence is that of Methionyl-tRNA formyltransferase from Wolbachia pipientis subsp. Culex pipiens (strain wPip).